The primary structure comprises 3414 residues: Genome polyprotein (3414 aa).

Positions Met1–Arg27 are disordered. The Cytoplasmic segment spans residues Met1 to Thr98. Residues Thr98–Ala116 constitute a propeptide, ER anchor for the capsid protein C, removed in mature form by serine protease NS3. The chain crosses the membrane as a helical span at residues Thr99 to Val119. Residues Arg120–Trp242 lie on the Extracellular side of the membrane. N-linked (GlcNAc...) asparagine; by host glycosylation is present at Asn144. A helical transmembrane segment spans residues Lys243 to Glu260. A topological domain (cytoplasmic) is located at residue Ser261. A helical transmembrane segment spans residues Ala262–Ala280. Over Ser281 to Ser727 the chain is Extracellular. 6 disulfide bridges follow: Cys283/Cys310, Cys340/Cys396, Cys340/Cys401, Cys354/Cys385, Cys372/Cys396, and Cys372/Cys401. The tract at residues Asp378 to Gly391 is fusion peptide. N-linked (GlcNAc...) asparagine; by host glycosylation is present at Asn434. 2 cysteine pairs are disulfide-bonded: Cys466–Cys570 and Cys587–Cys618. Residues Val728–Gly748 traverse the membrane as a helical segment. Residues Leu749–Thr755 are Cytoplasmic-facing. Residues Met756–Ala776 traverse the membrane as a helical segment. Residues Asp777–Glu1132 are Extracellular-facing. Disulfide bonds link Cys780–Cys791, Cys831–Cys920, Cys955–Cys1000, Cys1057–Cys1106, Cys1068–Cys1090, and Cys1089–Cys1093. N-linked (GlcNAc...) asparagine; by host glycosylation is found at Asn861, Asn983, and Asn999. Residues Leu1133–Ile1153 form a helical membrane-spanning segment. At Arg1154–Ser1158 the chain is on the cytoplasmic side. Residues Ala1159 to Val1179 traverse the membrane as a helical segment. Over Thr1180–Tyr1187 the chain is Lumenal. Residues Val1188–Leu1208 form a helical membrane-spanning segment. The Cytoplasmic segment spans residues Leu1209 to Thr1236. Residues Ile1237 to Trp1257 form a helical membrane-spanning segment. Residues Gly1258–Asn1293 are Lumenal-facing. A helical membrane pass occupies residues Ala1294 to Trp1314. Residues Lys1315–Pro1363 lie on the Cytoplasmic side of the membrane. A helical membrane pass occupies residues Leu1364–Thr1381. Ser1382 is a topological domain (lumenal). A helical transmembrane segment spans residues Gln1383 to Thr1403. Over Arg1404–Ala1454 the chain is Cytoplasmic. An interacts with and activates NS3 protease region spans residues Ala1410 to Glu1449. An intramembrane region (helical) is located at residues Phe1455–Met1475. Residues Gly1476–Ala2160 are Cytoplasmic-facing. The Peptidase S7 domain occupies Ser1490 to Pro1669. Catalysis depends on charge relay system; for serine protease NS3 activity residues His1543, Asp1567, and Ser1627. One can recognise a Helicase ATP-binding domain in the interval Thr1675 to Glu1831. ATP is bound at residue Met1688–Thr1695. The short motif at Asp1779–His1782 is the DEAH box element. The region spanning Asp1841–Tyr2000 is the Helicase C-terminal domain. Lys1883 carries the post-translational modification N6-acetyllysine; by host. Residues Phe2161 to Leu2181 traverse the membrane as a helical segment. The Lumenal segment spans residues Val2182–Arg2189. The segment at residues Met2190 to Gly2210 is an intramembrane region (helical). Tyr2211 is a topological domain (lumenal). The helical transmembrane segment at Gly2212–Ala2232 threads the bilayer. The Cytoplasmic segment spans residues Gly2233–Ala2244. Residues Tyr2245–Leu2265 form a helical membrane-spanning segment. Over Glu2266–Ser2299 the chain is Lumenal. Positions Trp2300–Thr2320 form an intramembrane region, helical. At Arg2321 to Gly2343 the chain is on the lumenal side. The helical intramembrane region spans Thr2344 to Ala2364. At Thr2365–Ser2368 the chain is on the lumenal side. Residues Leu2369–Ala2389 form a helical membrane-spanning segment. At Glu2390–Ser2432 the chain is on the cytoplasmic side. Residues Leu2433–Val2453 traverse the membrane as a helical segment. At Thr2454–Thr2477 the chain is on the lumenal side. A helical transmembrane segment spans residues Met2478 to Leu2498. Residues Gly2499–Ile3414 are Cytoplasmic-facing. An mRNA cap 0-1 NS5-type MT domain is found at Gly2512–Cys2776. Ser2567 contacts S-adenosyl-L-methionine. Ser2567 carries the phosphoserine modification. The active-site For 2'-O-MTase activity is Lys2572. Residues Gly2597, Trp2598, Thr2615, Ile2616, and Val2643 each coordinate S-adenosyl-L-methionine. Asp2657 acts as the For 2'-O-MTase activity in catalysis. Position 2658 (Ile2658) interacts with S-adenosyl-L-methionine. Active-site for 2'-O-MTase activity residues include Lys2694 and Glu2730. The interaction with host SCRIB stretch occupies residues Glu2730–Ser2734. Tyr2732 contributes to the S-adenosyl-L-methionine binding site. Residues Glu2950, His2954, Cys2959, and Cys2962 each coordinate Zn(2+). The 150-residue stretch at Gly3040–Ala3189 folds into the RdRp catalytic domain. Zn(2+) contacts are provided by His3224, Cys3240, and Cys3359.

In the N-terminal section; belongs to the class I-like SAM-binding methyltransferase superfamily. mRNA cap 0-1 NS5-type methyltransferase family. As to quaternary structure, homodimer. Forms heterodimers with envelope protein E in the endoplasmic reticulum and Golgi. In terms of assembly, homodimer; in the endoplasmic reticulum and Golgi. As to quaternary structure, forms homodimers as well as homohexamers. NS1 may interact with NS4A. Forms a heterodimer with serine protease NS3. May form homooligomers. In terms of assembly, forms a heterodimer with NS2B. Interacts with NS4B. Interacts with unphosphorylated RNA-directed RNA polymerase NS5; this interaction stimulates RNA-directed RNA polymerase NS5 guanylyltransferase activity. As to quaternary structure, interacts with serine protease NS3. Interacts with host STAT2; this interaction inhibits the phosphorylation of the latter, and, when all viral proteins are present (polyprotein), targets STAT2 for degradation. In terms of processing, specific enzymatic cleavages in vivo yield mature proteins. Cleavages in the lumen of endoplasmic reticulum are performed by host signal peptidase, whereas cleavages in the cytoplasmic side are performed by serine protease NS3. Signal cleavage at the 2K-4B site requires a prior NS3 protease-mediated cleavage at the 4A-2K site. Post-translationally, cleaved in post-Golgi vesicles by a host furin, releasing the mature small envelope protein M, and peptide pr. This cleavage is incomplete as up to 30% of viral particles still carry uncleaved prM. N-glycosylated. In terms of processing, N-glycosylated. The excreted form is glycosylated and this is required for efficient secretion of the protein from infected cells. Post-translationally, acetylated by host KAT5. Acetylation modulates NS3 RNA-binding and unwinding activities and plays an important positive role for viral replication. Phosphorylated on serines residues. This phosphorylation may trigger NS5 nuclear localization.

The protein localises to the virion. It localises to the host nucleus. The protein resides in the host cytoplasm. Its subcellular location is the host perinuclear region. It is found in the secreted. The protein localises to the virion membrane. It localises to the host endoplasmic reticulum membrane. The catalysed reaction is Selective hydrolysis of -Xaa-Xaa-|-Yaa- bonds in which each of the Xaa can be either Arg or Lys and Yaa can be either Ser or Ala.. The enzyme catalyses RNA(n) + a ribonucleoside 5'-triphosphate = RNA(n+1) + diphosphate. It catalyses the reaction a ribonucleoside 5'-triphosphate + H2O = a ribonucleoside 5'-diphosphate + phosphate + H(+). It carries out the reaction ATP + H2O = ADP + phosphate + H(+). The catalysed reaction is a 5'-end (5'-triphosphoguanosine)-ribonucleoside in mRNA + S-adenosyl-L-methionine = a 5'-end (N(7)-methyl 5'-triphosphoguanosine)-ribonucleoside in mRNA + S-adenosyl-L-homocysteine. The enzyme catalyses a 5'-end (N(7)-methyl 5'-triphosphoguanosine)-ribonucleoside in mRNA + S-adenosyl-L-methionine = a 5'-end (N(7)-methyl 5'-triphosphoguanosine)-(2'-O-methyl-ribonucleoside) in mRNA + S-adenosyl-L-homocysteine + H(+). In terms of biological role, plays a role in virus budding by binding to the cell membrane and gathering the viral RNA into a nucleocapsid that forms the core of a mature virus particle. During virus entry, may induce genome penetration into the host cytoplasm after hemifusion induced by the surface proteins. Can migrate to the cell nucleus where it modulates host functions. Its function is as follows. Inhibits RNA silencing by interfering with host Dicer. Functionally, prevents premature fusion activity of envelope proteins in trans-Golgi by binding to envelope protein E at pH6.0. After virion release in extracellular space, gets dissociated from E dimers. Acts as a chaperone for envelope protein E during intracellular virion assembly by masking and inactivating envelope protein E fusion peptide. prM is the only viral peptide matured by host furin in the trans-Golgi network probably to avoid catastrophic activation of the viral fusion activity in acidic Golgi compartment prior to virion release. prM-E cleavage is inefficient, and many virions are only partially matured. These uncleaved prM would play a role in immune evasion. In terms of biological role, may play a role in virus budding. Exerts cytotoxic effects by activating a mitochondrial apoptotic pathway through M ectodomain. May display a viroporin activity. Its function is as follows. Binds to host cell surface receptor and mediates fusion between viral and cellular membranes. Envelope protein is synthesized in the endoplasmic reticulum in the form of heterodimer with protein prM. They play a role in virion budding in the ER, and the newly formed immature particle is covered with 60 spikes composed of heterodimer between precursor prM and envelope protein E. The virion is transported to the Golgi apparatus where the low pH causes dissociation of PrM-E heterodimers and formation of E homodimers. prM-E cleavage is inefficient, and many virions are only partially matured. These uncleaved prM would play a role in immune evasion. Functionally, involved in immune evasion, pathogenesis and viral replication. Once cleaved off the polyprotein, is targeted to three destinations: the viral replication cycle, the plasma membrane and the extracellular compartment. Essential for viral replication. Required for formation of the replication complex and recruitment of other non-structural proteins to the ER-derived membrane structures. Excreted as a hexameric lipoparticle that plays a role against host immune response. Antagonizing the complement function. Binds to the host macrophages and dendritic cells. Inhibits signal transduction originating from Toll-like receptor 3 (TLR3). Component of the viral RNA replication complex that functions in virion assembly and antagonizes the host immune response. In terms of biological role, required cofactor for the serine protease function of NS3. May have membrane-destabilizing activity and form viroporins. Its function is as follows. Displays three enzymatic activities: serine protease, NTPase and RNA helicase. NS3 serine protease, in association with NS2B, performs its autocleavage and cleaves the polyprotein at dibasic sites in the cytoplasm: C-prM, NS2A-NS2B, NS2B-NS3, NS3-NS4A, NS4A-2K and NS4B-NS5. NS3 RNA helicase binds RNA and unwinds dsRNA in the 3' to 5' direction. Functionally, regulates the ATPase activity of the NS3 helicase activity. NS4A allows NS3 helicase to conserve energy during unwinding. Functions as a signal peptide for NS4B and is required for the interferon antagonism activity of the latter. In terms of biological role, induces the formation of ER-derived membrane vesicles where the viral replication takes place. Inhibits interferon (IFN)-induced host STAT1 phosphorylation and nuclear translocation, thereby preventing the establishment of cellular antiviral state by blocking the IFN-alpha/beta pathway. Inhibits STAT2 translocation in the nucleus after IFN-alpha treatment. Its function is as follows. Replicates the viral (+) and (-) RNA genome, and performs the capping of genomes in the cytoplasm. NS5 methylates viral RNA cap at guanine N-7 and ribose 2'-O positions. Besides its role in RNA genome replication, also prevents the establishment of cellular antiviral state by blocking the interferon-alpha/beta (IFN-alpha/beta) signaling pathway. Inhibits host TYK2 and STAT2 phosphorylation, thereby preventing activation of JAK-STAT signaling pathway. In Homo sapiens (Human), this protein is Genome polyprotein.